Here is a 381-residue protein sequence, read N- to C-terminus: Arrestin homolog (381 aa).

The protein belongs to the arrestin family.

The sequence is that of Arrestin homolog from Heliothis virescens (Tobacco budworm moth).